The primary structure comprises 345 residues: Dihydroorotase (345 aa).

Zn(2+) contacts are provided by His13 and His15. Substrate-binding positions include 15 to 17 (HFR) and Asn41. Zn(2+)-binding residues include Lys98, His135, and His173. The residue at position 98 (Lys98) is an N6-carboxylysine. Residue His135 participates in substrate binding. Leu218 is a substrate binding site. A Zn(2+)-binding site is contributed by Asp246. Asp246 is a catalytic residue. Positions 250 and 262 each coordinate substrate.

Belongs to the metallo-dependent hydrolases superfamily. DHOase family. Class II DHOase subfamily. Homodimer. The cofactor is Zn(2+).

The enzyme catalyses (S)-dihydroorotate + H2O = N-carbamoyl-L-aspartate + H(+). It functions in the pathway pyrimidine metabolism; UMP biosynthesis via de novo pathway; (S)-dihydroorotate from bicarbonate: step 3/3. Catalyzes the reversible cyclization of carbamoyl aspartate to dihydroorotate. This chain is Dihydroorotase, found in Shewanella piezotolerans (strain WP3 / JCM 13877).